Here is a 55-residue protein sequence, read N- to C-terminus: Large ribosomal subunit protein bL33 (55 aa).

Belongs to the bacterial ribosomal protein bL33 family.

The sequence is that of Large ribosomal subunit protein bL33 from Pectobacterium carotovorum subsp. carotovorum (strain PC1).